A 75-amino-acid polypeptide reads, in one-letter code: Small ribosomal subunit protein bS21 (75 aa).

The protein belongs to the bacterial ribosomal protein bS21 family.

This Brucella abortus (strain S19) protein is Small ribosomal subunit protein bS21.